A 288-amino-acid chain; its full sequence is Zinc finger protein 42 (288 aa).

Composition is skewed to basic and acidic residues over residues 1–11 (MNEQKMNEQMK) and 26–38 (ALDR…DEAR). The interval 1–48 (MNEQKMNEQMKKTAKTSGQKGPGGRALDRLTLKQDEARPVQNTRVEAP) is disordered. 4 C2H2-type zinc fingers span residues 170–194 (LECP…MLVH), 199–221 (HVCA…FLVH), 227–251 (YQCT…IRIH), and 258–281 (VCPF…ILTH). Glycyl lysine isopeptide (Lys-Gly) (interchain with G-Cter in ubiquitin) cross-links involve residues lysine 213 and lysine 215.

It belongs to the krueppel C2H2-type zinc-finger protein family. In terms of processing, polyubiquitinated by RNF12, leading to proteasomal degradation. In terms of tissue distribution, restricted to testis, to germ cells in the early stages of spermatogenesis. Not expressed in spermatids, nor spermatozoa. Expressed in embryonic stem (ES) cells.

The protein resides in the nucleus. Involved in the reprogramming of X-chromosome inactivation during the acquisition of pluripotency. Required for efficient elongation of TSIX, a non-coding RNA antisense to XIST. Binds DXPas34 enhancer within the TSIX promoter. Involved in ES cell self-renewal. This is Zinc finger protein 42 (Zfp42) from Mus musculus (Mouse).